A 57-amino-acid polypeptide reads, in one-letter code: Large ribosomal subunit protein bL32c (57 aa).

The protein belongs to the bacterial ribosomal protein bL32 family.

It is found in the plastid. The protein resides in the chloroplast. This Vitis vinifera (Grape) protein is Large ribosomal subunit protein bL32c.